Reading from the N-terminus, the 1015-residue chain is Transposase for transposon Tn3 (1015 aa).

This sequence belongs to the transposase 7 family.

Functionally, required for transposition of transposon Tn3. The chain is Transposase for transposon Tn3 (tnpA) from Escherichia coli.